The primary structure comprises 393 residues: Argininosuccinate synthase (393 aa).

ATP-binding positions include A7–S15 and A34. Residues Y85 and S90 each coordinate L-citrulline. G115 provides a ligand contact to ATP. L-aspartate contacts are provided by T117, N121, and D122. Residue N121 coordinates L-citrulline. L-citrulline is bound by residues R125, S176, S185, E261, and Y273.

It belongs to the argininosuccinate synthase family. Type 1 subfamily. In terms of assembly, homotetramer.

Its subcellular location is the cytoplasm. The enzyme catalyses L-citrulline + L-aspartate + ATP = 2-(N(omega)-L-arginino)succinate + AMP + diphosphate + H(+). It functions in the pathway amino-acid biosynthesis; L-arginine biosynthesis; L-arginine from L-ornithine and carbamoyl phosphate: step 2/3. The protein is Argininosuccinate synthase of Ehrlichia chaffeensis (strain ATCC CRL-10679 / Arkansas).